Consider the following 213-residue polypeptide: Sclerostin (213 aa).

A signal peptide spans 1 to 23 (MQLPLALCLVCLLVHAAFRVVEG). Positions 41-71 (GEYPEPPPELENNKTMNRAENGGRPPHHPFE) are disordered. Asn-53 is a glycosylation site (N-linked (GlcNAc...) asparagine). Intrachain disulfides connect Cys-80–Cys-134, Cys-94–Cys-148, Cys-105–Cys-165, and Cys-109–Cys-167. A CTCK domain is found at 82–172 (ELHFTRYVTD…ASCKCKRLTR (91 aa)). A glycan (N-linked (GlcNAc...) asparagine) is linked at Asn-175. The segment at 178-213 (ELKDFGPEAARPQKGRKPRPRARGAKANQAELENAY) is disordered. Over residues 190 to 201 (QKGRKPRPRARG) the composition is skewed to basic residues.

This sequence belongs to the sclerostin family. Interacts with LRP4 (via the extracellular domain); the interaction facilitates the inhibition of Wnt signaling. Interacts with LRP5 (via the first two YWTD-EGF repeat domains); the interaction inhibits Wnt-mediated signaling. Interacts with LRP6.

The protein localises to the secreted. It localises to the extracellular space. It is found in the extracellular matrix. Negative regulator of bone growth that acts through inhibition of Wnt signaling and bone formation. The polypeptide is Sclerostin (Chlorocebus aethiops (Green monkey)).